Here is a 204-residue protein sequence, read N- to C-terminus: Thymidylate kinase (204 aa).

11-18 (GLDKSGKT) contacts ATP.

The protein belongs to the thymidylate kinase family.

The catalysed reaction is dTMP + ATP = dTDP + ADP. It participates in pyrimidine metabolism; dTTP biosynthesis. The protein is Thymidylate kinase (TMK) of Camelus.